The following is a 36-amino-acid chain: Pancreatic polypeptide (36 aa).

The residue at position 36 (Phe-36) is a Phenylalanine amide.

It belongs to the NPY family.

It localises to the secreted. In terms of biological role, hormone secreted by pancreatic cells that acts as a regulator of pancreatic and gastrointestinal functions. This Aquarana catesbeiana (American bullfrog) protein is Pancreatic polypeptide (ppy).